A 301-amino-acid chain; its full sequence is HPr kinase/phosphorylase (301 aa).

Residues histidine 134 and lysine 155 contribute to the active site. Residue 149-156 (GKSGLGKS) coordinates ATP. Residue serine 156 participates in Mg(2+) binding. The Proton acceptor; for phosphorylation activity. Proton donor; for dephosphorylation activity role is filled by aspartate 173. The tract at residues 196–205 (LEVRGLGIIN) is important for the catalytic mechanism of both phosphorylation and dephosphorylation. Residue glutamate 197 coordinates Mg(2+). Residue arginine 239 is part of the active site. The segment at 260–265 (PITPGK) is important for the catalytic mechanism of dephosphorylation.

This sequence belongs to the HPrK/P family. In terms of assembly, homohexamer. It depends on Mg(2+) as a cofactor.

The catalysed reaction is [HPr protein]-L-serine + ATP = [HPr protein]-O-phospho-L-serine + ADP + H(+). It catalyses the reaction [HPr protein]-O-phospho-L-serine + phosphate + H(+) = [HPr protein]-L-serine + diphosphate. Catalyzes the ATP- as well as the pyrophosphate-dependent phosphorylation of a specific serine residue in HPr, a phosphocarrier protein of the phosphoenolpyruvate-dependent sugar phosphotransferase system (PTS). HprK/P also catalyzes the pyrophosphate-producing, inorganic phosphate-dependent dephosphorylation (phosphorolysis) of seryl-phosphorylated HPr (P-Ser-HPr). The two antagonistic activities of HprK/P are regulated by several intracellular metabolites, which change their concentration in response to the absence or presence of rapidly metabolisable carbon sources (glucose, fructose, etc.) in the growth medium. Therefore, by controlling the phosphorylation state of HPr, HPrK/P is a sensor enzyme that plays a major role in the regulation of carbon metabolism and sugar transport: it mediates carbon catabolite repression (CCR), and regulates PTS-catalyzed carbohydrate uptake and inducer exclusion. The chain is HPr kinase/phosphorylase from Malacoplasma penetrans (strain HF-2) (Mycoplasma penetrans).